Reading from the N-terminus, the 72-residue chain is Translation initiation factor IF-1 (72 aa).

One can recognise an S1-like domain in the interval 1-72 (MAKADVIEVE…TKGRITFRFK (72 aa)).

This sequence belongs to the IF-1 family. Component of the 30S ribosomal translation pre-initiation complex which assembles on the 30S ribosome in the order IF-2 and IF-3, IF-1 and N-formylmethionyl-tRNA(fMet); mRNA recruitment can occur at any time during PIC assembly.

The protein localises to the cytoplasm. In terms of biological role, one of the essential components for the initiation of protein synthesis. Stabilizes the binding of IF-2 and IF-3 on the 30S subunit to which N-formylmethionyl-tRNA(fMet) subsequently binds. Helps modulate mRNA selection, yielding the 30S pre-initiation complex (PIC). Upon addition of the 50S ribosomal subunit IF-1, IF-2 and IF-3 are released leaving the mature 70S translation initiation complex. This Limosilactobacillus reuteri (strain DSM 20016) (Lactobacillus reuteri) protein is Translation initiation factor IF-1.